A 374-amino-acid polypeptide reads, in one-letter code: Organelle RRM domain-containing protein 1, chloroplastic (374 aa).

The transit peptide at Met1–Ser54 directs the protein to the chloroplast. Residues Lys258 to Gln271 are compositionally biased toward basic and acidic residues. The segment at Lys258 to Val279 is disordered. Residues Lys282–Thr360 enclose the RRM domain.

Interacts with PCMP-H51/CRR28 and PCMP-H12/OTP82. Interacts with MORF8/RIP1, MORF2/RIP2 and VAR3/OZ1.

The protein resides in the plastid. It is found in the chloroplast. In terms of biological role, involved in C-to-U editing of chloroplastic RNA. Functions as major chloroplastic editing factor. Controls 62 percent of the chloroplastic editing sites. Binds RNA close to ORRM1-dependent editing sites in vitro. Binds the editing recognition trans-factors PCMP-H51/CRR28 and PCMP-H12/OTP82. This chain is Organelle RRM domain-containing protein 1, chloroplastic, found in Arabidopsis thaliana (Mouse-ear cress).